A 339-amino-acid chain; its full sequence is MIINDAIKKLALREELTEDEVRGVINQIMKGEATSSQIGGFLVGLRVNGETPRQILGAVKAIRDNGVKVEIENTEHLIDTCGTGGDGSKTFNISTAVAIVAASGGAKVAKHGNRAVSSKSGCADVLVELGINIDFDEIQSKKIIEENGMAFLFAPKYNGAMKNVSKERKELGIRTIFNLLGPLANPAPITGQLMGVYDGALLKDIGEVLLNLGLKRAMIVHGDDGLDEITITTSTSICEVKDGKIKNYKLDPEKLGFKKATLDDIKGGEAKENAEIIIKILKGERGPKRDIVVLNSGAALYVANLVDSIEDGIKKASELIDSRAAYKKYEELSSLQVIV.

5-phospho-alpha-D-ribose 1-diphosphate contacts are provided by residues Gly82, 85–86 (GD), Thr90, 92–95 (NIST), and 110–118 (KHGNRAVSS). An anthranilate-binding site is contributed by Gly82. Ser94 lines the Mg(2+) pocket. 2 residues coordinate anthranilate: Asn113 and Arg168. Asp227 and Glu228 together coordinate Mg(2+).

Belongs to the anthranilate phosphoribosyltransferase family. In terms of assembly, homodimer. It depends on Mg(2+) as a cofactor.

The catalysed reaction is N-(5-phospho-beta-D-ribosyl)anthranilate + diphosphate = 5-phospho-alpha-D-ribose 1-diphosphate + anthranilate. The protein operates within amino-acid biosynthesis; L-tryptophan biosynthesis; L-tryptophan from chorismate: step 2/5. Functionally, catalyzes the transfer of the phosphoribosyl group of 5-phosphorylribose-1-pyrophosphate (PRPP) to anthranilate to yield N-(5'-phosphoribosyl)-anthranilate (PRA). The sequence is that of Anthranilate phosphoribosyltransferase from Clostridium beijerinckii (strain ATCC 51743 / NCIMB 8052) (Clostridium acetobutylicum).